We begin with the raw amino-acid sequence, 125 residues long: Lymphocyte antigen 6 complex locus protein G6c (125 aa).

A signal peptide spans 1 to 18 (MRALLLLSLSALLCWVSA). Residues 20 to 111 (IRCHSCYKLP…PRPTPALTLV (92 aa)) form the UPAR/Ly6 domain. 3 cysteine pairs are disulfide-bonded: Cys22–Cys47, Cys25–Cys33, and Cys39–Cys65. Residue Asn88 is glycosylated (N-linked (GlcNAc...) asparagine). Cys92 and Cys97 are oxidised to a cystine. Ser99 carries the GPI-anchor amidated serine lipid modification. Positions 100–125 (PAPRPTPALTLVFLTSLAGLGLWLLH) are cleaved as a propeptide — removed in mature form.

In terms of processing, N-glycosylated.

Its subcellular location is the cell membrane. The polypeptide is Lymphocyte antigen 6 complex locus protein G6c (LY6G6C) (Bos taurus (Bovine)).